A 497-amino-acid chain; its full sequence is Aldehyde dehydrogenase (497 aa).

242 to 247 is an NAD(+) binding site; sequence GSTLVG. Glutamate 265 serves as the catalytic Proton acceptor. Cysteine 299 functions as the Nucleophile in the catalytic mechanism.

Belongs to the aldehyde dehydrogenase family.

It carries out the reaction an aldehyde + NAD(+) + H2O = a carboxylate + NADH + 2 H(+). It functions in the pathway alcohol metabolism; ethanol degradation; acetate from ethanol: step 2/2. The polypeptide is Aldehyde dehydrogenase (aldA) (Aspergillus niger).